The following is a 706-amino-acid chain: Serotransferrin (706 aa).

A signal peptide spans 1-19 (MRLAIRALLACAVLGLCLA). 2 consecutive Transferrin-like domains span residues 23–349 (VRWC…NLRE) and 363–691 (VKWC…NLRQ). Disulfide bonds link Cys26-Cys64 and Cys36-Cys55. Arg40 bears the Dimethylated arginine mark. Asp79 and Tyr111 together coordinate Fe(3+). Disulfide bonds link Cys134–Cys215, Cys174–Cys190, Cys177–Cys198, Cys187–Cys200, and Cys248–Cys262. Hydrogencarbonate is bound by residues Thr136, Arg140, Ala142, and Gly143. Residue Tyr209 coordinates Fe(3+). Fe(3+) is bound at residue His270. 11 disulfide bridges follow: Cys360–Cys623, Cys366–Cys398, Cys376–Cys389, Cys423–Cys701, Cys441–Cys664, Cys474–Cys550, Cys498–Cys692, Cys508–Cys522, Cys519–Cys533, Cys590–Cys604, and Cys642–Cys647. The residue at position 391 (Ser391) is a Phosphoserine. Residues Asp413 and Tyr449 each coordinate Fe(3+). The hydrogencarbonate site is built by Thr476, Arg480, Ala482, and Gly483. N-linked (GlcNAc...) asparagine glycosylation is present at Asn515. Tyr544 serves as a coordination point for Fe(3+). Residue His612 participates in Fe(3+) binding. Ser693 is subject to Phosphoserine.

The protein belongs to the transferrin family. Monomer. Part of a complex composed of SLC40A1/ferroportin, TF/transferrin and HEPH/hephaestin that transfers iron from cells to transferrin. In terms of tissue distribution, expressed by the liver and secreted in plasma.

It is found in the secreted. Its function is as follows. Transferrins are iron binding transport proteins which can bind two Fe(3+) ions in association with the binding of an anion, usually bicarbonate. It is responsible for the transport of iron from sites of absorption and heme degradation to those of storage and utilization. Serum transferrin may also have a further role in stimulating cell proliferation. In Equus caballus (Horse), this protein is Serotransferrin (TF).